A 447-amino-acid chain; its full sequence is tRNA-2-methylthio-N(6)-dimethylallyladenosine synthase (447 aa).

Residues 3 to 120 (KKLYIETHGC…LPEMIDAART (118 aa)) enclose the MTTase N-terminal domain. Positions 12, 49, 83, 157, 161, and 164 each coordinate [4Fe-4S] cluster. The Radical SAM core domain maps to 143-375 (RVDGPSAFVS…QHRINQYGFE (233 aa)). One can recognise a TRAM domain in the interval 378-442 (RRMVGTVQRI…PHSLRGTLLD (65 aa)).

It belongs to the methylthiotransferase family. MiaB subfamily. As to quaternary structure, monomer. [4Fe-4S] cluster serves as cofactor.

It is found in the cytoplasm. The catalysed reaction is N(6)-dimethylallyladenosine(37) in tRNA + (sulfur carrier)-SH + AH2 + 2 S-adenosyl-L-methionine = 2-methylsulfanyl-N(6)-dimethylallyladenosine(37) in tRNA + (sulfur carrier)-H + 5'-deoxyadenosine + L-methionine + A + S-adenosyl-L-homocysteine + 2 H(+). Functionally, catalyzes the methylthiolation of N6-(dimethylallyl)adenosine (i(6)A), leading to the formation of 2-methylthio-N6-(dimethylallyl)adenosine (ms(2)i(6)A) at position 37 in tRNAs that read codons beginning with uridine. In Ectopseudomonas mendocina (strain ymp) (Pseudomonas mendocina), this protein is tRNA-2-methylthio-N(6)-dimethylallyladenosine synthase.